Reading from the N-terminus, the 151-residue chain is Small ribosomal subunit protein uS15 (151 aa).

The protein belongs to the universal ribosomal protein uS15 family. In terms of assembly, component of the small ribosomal subunit. Mature ribosomes consist of a small (40S) and a large (60S) subunit. The 40S subunit contains about 32 different proteins and 1 molecule of RNA (18S). The 60S subunit contains 45 different proteins and 3 molecules of RNA (25S, 5.8S and 5S).

The protein localises to the cytoplasm. Its function is as follows. Component of the ribosome, a large ribonucleoprotein complex responsible for the synthesis of proteins in the cell. The small ribosomal subunit (SSU) binds messenger RNAs (mRNAs) and translates the encoded message by selecting cognate aminoacyl-transfer RNA (tRNA) molecules. The large subunit (LSU) contains the ribosomal catalytic site termed the peptidyl transferase center (PTC), which catalyzes the formation of peptide bonds, thereby polymerizing the amino acids delivered by tRNAs into a polypeptide chain. The nascent polypeptides leave the ribosome through a tunnel in the LSU and interact with protein factors that function in enzymatic processing, targeting, and the membrane insertion of nascent chains at the exit of the ribosomal tunnel. This Candida albicans (strain SC5314 / ATCC MYA-2876) (Yeast) protein is Small ribosomal subunit protein uS15 (RPS13).